The sequence spans 253 residues: Imidazole glycerol phosphate synthase subunit HisF (253 aa).

Residues Asp-11 and Asp-130 contribute to the active site.

Belongs to the HisA/HisF family. Heterodimer of HisH and HisF.

It localises to the cytoplasm. The catalysed reaction is 5-[(5-phospho-1-deoxy-D-ribulos-1-ylimino)methylamino]-1-(5-phospho-beta-D-ribosyl)imidazole-4-carboxamide + L-glutamine = D-erythro-1-(imidazol-4-yl)glycerol 3-phosphate + 5-amino-1-(5-phospho-beta-D-ribosyl)imidazole-4-carboxamide + L-glutamate + H(+). Its pathway is amino-acid biosynthesis; L-histidine biosynthesis; L-histidine from 5-phospho-alpha-D-ribose 1-diphosphate: step 5/9. In terms of biological role, IGPS catalyzes the conversion of PRFAR and glutamine to IGP, AICAR and glutamate. The HisF subunit catalyzes the cyclization activity that produces IGP and AICAR from PRFAR using the ammonia provided by the HisH subunit. The polypeptide is Imidazole glycerol phosphate synthase subunit HisF (Cereibacter sphaeroides (strain ATCC 17029 / ATH 2.4.9) (Rhodobacter sphaeroides)).